The primary structure comprises 1463 residues: DNA-directed RNA polymerase subunit beta'' (1463 aa).

Positions 239, 312, 319, and 322 each coordinate Zn(2+). Disordered stretches follow at residues 836–869 (TFTG…ETRM) and 987–1007 (TNRS…AQAR). Residues 860 to 869 (AANSSHETRM) show a composition bias toward polar residues. Residues 987-996 (TNRSKTRRNA) show a composition bias toward basic residues. Positions 997–1007 (SGKTQVKAQAR) are enriched in polar residues.

Belongs to the RNA polymerase beta' chain family. RpoC2 subfamily. In plastids the minimal PEP RNA polymerase catalytic core is composed of four subunits: alpha, beta, beta', and beta''. When a (nuclear-encoded) sigma factor is associated with the core the holoenzyme is formed, which can initiate transcription. Requires Zn(2+) as cofactor.

The protein resides in the plastid. Its subcellular location is the chloroplast. The enzyme catalyses RNA(n) + a ribonucleoside 5'-triphosphate = RNA(n+1) + diphosphate. Its function is as follows. DNA-dependent RNA polymerase catalyzes the transcription of DNA into RNA using the four ribonucleoside triphosphates as substrates. The protein is DNA-directed RNA polymerase subunit beta'' of Nephroselmis olivacea (Green alga).